A 189-amino-acid chain; its full sequence is Casparian strip membrane protein 1 (189 aa).

At 1–42 the chain is on the cytoplasmic side; sequence MEKNESSAIEIAESSKERKGKAPLLAAAVGHDRAAGYKRGVS. A helical transmembrane segment spans residues 43-63; that stretch reads IFDLILRISAATAALAATIVM. The Extracellular segment spans residues 64–90; that stretch reads GTTEQTLPFFTQFFQFRAQYDDLPTFT. A helical transmembrane segment spans residues 91-111; that stretch reads FFVVGMAIVTGYLILSVPLSI. The Cytoplasmic portion of the chain corresponds to 112 to 130; it reads VCIARPVAIGPRFLLIVCD. A helical membrane pass occupies residues 131–151; that stretch reads TVTAVLATSAAGSSAAIVYLA. Residues 152 to 189 are Extracellular-facing; sequence HNGNSDANWLAICQQFNDFCQRVSGAVVAAFVAVVCSS.

The protein belongs to the Casparian strip membrane proteins (CASP) family. In terms of assembly, homodimer and heterodimers.

The protein localises to the cell membrane. In terms of biological role, regulates membrane-cell wall junctions and localized cell wall deposition. Required for establishment of the Casparian strip membrane domain (CSD) and the subsequent formation of Casparian strips, a cell wall modification of the root endodermis that determines an apoplastic barrier between the intraorganismal apoplasm and the extraorganismal apoplasm and prevents lateral diffusion. In Striga asiatica (Asiatic witchweed), this protein is Casparian strip membrane protein 1.